The chain runs to 76 residues: MKVSPRLNSALLLLFMILATVMGLVTVEARTCETSSNLFNGPCLSSSNCANVCHNEGFSDGDCRGFRRRCLCTRPC.

An N-terminal signal peptide occupies residues 1 to 29 (MKVSPRLNSALLLLFMILATVMGLVTVEA). Disulfide bonds link Cys32/Cys76, Cys43/Cys63, Cys49/Cys70, and Cys53/Cys72.

This sequence belongs to the DEFL family.

It is found in the secreted. In terms of biological role, confers broad-spectrum resistance to pathogens. This is Defensin-like protein 5 (PDF2.4) from Arabidopsis thaliana (Mouse-ear cress).